A 380-amino-acid chain; its full sequence is Ceramide-binding protein svf1 (380 aa).

The tract at residues 1-18 (MKAWLQSSISYYTGTAEP) is peripherally associates with membranes.

The protein belongs to the SVF1 family.

The protein localises to the golgi apparatus. It is found in the cis-Golgi network membrane. The protein resides in the endoplasmic reticulum membrane. Its subcellular location is the cytoplasm. It localises to the nucleus. Functionally, ceramide-binding protein that may transfer ceramides from the endoplasmic reticulum membrane to the cis-Golgi network membrane, and is thereby required for the biosynthesis of complex sphingolipids. The chain is Ceramide-binding protein svf1 from Schizosaccharomyces pombe (strain 972 / ATCC 24843) (Fission yeast).